The sequence spans 234 residues: Small ribosomal subunit protein uS3 (234 aa).

Residues 39–108 (IRKFVKKKLF…TVIVNVVEVK (70 aa)) enclose the KH type-2 domain. The disordered stretch occupies residues 212 to 234 (KGKNEETNNETADNSRGRRREAK).

This sequence belongs to the universal ribosomal protein uS3 family. As to quaternary structure, part of the 30S ribosomal subunit. Forms a tight complex with proteins S10 and S14.

In terms of biological role, binds the lower part of the 30S subunit head. Binds mRNA in the 70S ribosome, positioning it for translation. In Alkaliphilus metalliredigens (strain QYMF), this protein is Small ribosomal subunit protein uS3.